The following is a 738-amino-acid chain: uncharacterized protein (738 aa).

3 stretches are compositionally biased toward polar residues: residues 1 to 34 (MSSSSKDSSFQVETPVQNILETSTNSELQDQVSS), 140 to 169 (TSSDFQSKDSLSTTQPSVSGGNGSTSQSPP), and 177 to 197 (KPFSISNEPVEQETENSSTKD). Disordered stretches follow at residues 1 to 51 (MSSS…AASI) and 140 to 197 (TSSD…STKD). Residues 363–434 (SRLFLGHLNT…QKLHLEISKI (72 aa)) enclose the RRM domain. A disordered region spans residues 466–487 (YPTSSRKRTRSPLMSKGKSYDR).

This is an uncharacterized protein from Schizosaccharomyces pombe (strain 972 / ATCC 24843) (Fission yeast).